A 673-amino-acid chain; its full sequence is DNA ligase (673 aa).

NAD(+)-binding positions include 34 to 38 (DAEYD), 83 to 84 (SL), and Glu116. Lys118 (N6-AMP-lysine intermediate) is an active-site residue. The NAD(+) site is built by Arg139, Glu176, Lys293, and Lys317. Cys411, Cys414, Cys429, and Cys435 together coordinate Zn(2+). Positions 595-673 (NQQNPFFGKT…EDEFLKWVNS (79 aa)) constitute a BRCT domain.

The protein belongs to the NAD-dependent DNA ligase family. LigA subfamily. Mg(2+) serves as cofactor. It depends on Mn(2+) as a cofactor.

The enzyme catalyses NAD(+) + (deoxyribonucleotide)n-3'-hydroxyl + 5'-phospho-(deoxyribonucleotide)m = (deoxyribonucleotide)n+m + AMP + beta-nicotinamide D-nucleotide.. Functionally, DNA ligase that catalyzes the formation of phosphodiester linkages between 5'-phosphoryl and 3'-hydroxyl groups in double-stranded DNA using NAD as a coenzyme and as the energy source for the reaction. It is essential for DNA replication and repair of damaged DNA. In Legionella pneumophila (strain Lens), this protein is DNA ligase.